We begin with the raw amino-acid sequence, 513 residues long: Histidine ammonia-lyase (513 aa).

The segment at residues 144–146 (ASG) is a cross-link (5-imidazolinone (Ala-Gly)). A 2,3-didehydroalanine (Ser) modification is found at Ser145.

The protein belongs to the PAL/histidase family. Post-translationally, contains an active site 4-methylidene-imidazol-5-one (MIO), which is formed autocatalytically by cyclization and dehydration of residues Ala-Ser-Gly.

The protein resides in the cytoplasm. The catalysed reaction is L-histidine = trans-urocanate + NH4(+). It participates in amino-acid degradation; L-histidine degradation into L-glutamate; N-formimidoyl-L-glutamate from L-histidine: step 1/3. The chain is Histidine ammonia-lyase from Streptococcus gordonii (strain Challis / ATCC 35105 / BCRC 15272 / CH1 / DL1 / V288).